Consider the following 360-residue polypeptide: Phospho-N-acetylmuramoyl-pentapeptide-transferase (360 aa).

10 helical membrane passes run 21 to 41 (YITF…LWIG), 73 to 93 (TMGG…WADL), 98 to 118 (VWFV…DDYW), 132 to 152 (WKYF…YAIG), 168 to 188 (VMPQ…VGTS), 199 to 219 (GLAI…AWAT), 236 to 256 (SGEL…FLWF), 263 to 283 (VFMG…IAVL), 288 to 308 (LLLV…ILQV), and 338 to 358 (VIVR…VTLK).

This sequence belongs to the glycosyltransferase 4 family. MraY subfamily. Mg(2+) is required as a cofactor.

Its subcellular location is the cell inner membrane. The enzyme catalyses UDP-N-acetyl-alpha-D-muramoyl-L-alanyl-gamma-D-glutamyl-meso-2,6-diaminopimeloyl-D-alanyl-D-alanine + di-trans,octa-cis-undecaprenyl phosphate = di-trans,octa-cis-undecaprenyl diphospho-N-acetyl-alpha-D-muramoyl-L-alanyl-D-glutamyl-meso-2,6-diaminopimeloyl-D-alanyl-D-alanine + UMP. It participates in cell wall biogenesis; peptidoglycan biosynthesis. In terms of biological role, catalyzes the initial step of the lipid cycle reactions in the biosynthesis of the cell wall peptidoglycan: transfers peptidoglycan precursor phospho-MurNAc-pentapeptide from UDP-MurNAc-pentapeptide onto the lipid carrier undecaprenyl phosphate, yielding undecaprenyl-pyrophosphoryl-MurNAc-pentapeptide, known as lipid I. This is Phospho-N-acetylmuramoyl-pentapeptide-transferase from Glaesserella parasuis serovar 5 (strain SH0165) (Haemophilus parasuis).